Here is a 447-residue protein sequence, read N- to C-terminus: MEAKNITIDNTTYNFFKFYNINQPLTNLKYLNSERLCFSNAVMGKIVDDASTITITYHRVYFGISGPKPRQVADLGEYYDVNELLNYDTYTKTQEFAQKYNSLVKPTIDAKNWSGNELVLLVGNEWYCKTFGKAGSKNVFLYNMIPTIYRDEPQHQEQILKKFMFFNATKNVEQNPNFLDNVPEEYYHLLLPKSWVEKNLSDKYRKIMETEHKPLVFSCEPAFSFGLCRNTQDKNESYQLSLCLYEREKPRDAEIVWAAKYDELAAMVRDYLKKTPEFKKYRSFISCMKGLSWKNNEIGDKDGPKLYPKVIFNRKKGEFVTIFTKDDDVEPETIEDPRTILDRRCVVQAALRLESVFVHNKVAIQLRINDVLISEWKEASSKPQPLILRRHRFTKPSSSVAKSTSPSLRNSGSDESDLNQSDSDKEDERVVPVPKTKRIVKTVKLPN.

Residues 392 to 435 (RFTKPSSSVAKSTSPSLRNSGSDESDLNQSDSDKEDERVVPVPK) are disordered. The segment covering 395-407 (KPSSSVAKSTSPS) has biased composition (low complexity). Polar residues predominate over residues 408 to 421 (LRNSGSDESDLNQS).

This is an uncharacterized protein from Invertebrate iridescent virus 3 (IIV-3).